We begin with the raw amino-acid sequence, 353 residues long: Photosystem II protein D1 (353 aa).

T2 is modified (N-acetylthreonine). T2 bears the Phosphothreonine mark. 3 helical membrane-spanning segments follow: residues 29–46 (YIGWFGVLMIPTLLTATS), 118–133 (HFLLGVACYMGREWEL), and 142–156 (WIAVAYSAPVAAATA). H118 provides a ligand contact to chlorophyll a. Residue Y126 coordinates pheophytin a. [CaMn4O5] cluster-binding residues include D170 and E189. The helical transmembrane segment at 197-218 (FHMLGVAGVFGGSLFSAMHGSL) threads the bilayer. A chlorophyll a-binding site is contributed by H198. A quinone is bound by residues H215 and 264 to 265 (SF). H215 serves as a coordination point for Fe cation. Residue H272 coordinates Fe cation. Residues 274-288 (FLTAWPVVGIWFTAL) form a helical membrane-spanning segment. Residues H332, E333, D342, and A344 each coordinate [CaMn4O5] cluster. Positions 345–353 (VVEAPSTNG) are excised as a propeptide.

The protein belongs to the reaction center PufL/M/PsbA/D family. PSII is composed of 1 copy each of membrane proteins PsbA, PsbB, PsbC, PsbD, PsbE, PsbF, PsbH, PsbI, PsbJ, PsbK, PsbL, PsbM, PsbT, PsbX, PsbY, PsbZ, Psb30/Ycf12, at least 3 peripheral proteins of the oxygen-evolving complex and a large number of cofactors. It forms dimeric complexes. The D1/D2 heterodimer binds P680, chlorophylls that are the primary electron donor of PSII, and subsequent electron acceptors. It shares a non-heme iron and each subunit binds pheophytin, quinone, additional chlorophylls, carotenoids and lipids. D1 provides most of the ligands for the Mn4-Ca-O5 cluster of the oxygen-evolving complex (OEC). There is also a Cl(-1) ion associated with D1 and D2, which is required for oxygen evolution. The PSII complex binds additional chlorophylls, carotenoids and specific lipids. is required as a cofactor. Post-translationally, tyr-161 forms a radical intermediate that is referred to as redox-active TyrZ, YZ or Y-Z. In terms of processing, C-terminally processed by CTPA; processing is essential to allow assembly of the oxygen-evolving complex and thus photosynthetic growth.

It is found in the plastid. It localises to the chloroplast thylakoid membrane. It carries out the reaction 2 a plastoquinone + 4 hnu + 2 H2O = 2 a plastoquinol + O2. In terms of biological role, photosystem II (PSII) is a light-driven water:plastoquinone oxidoreductase that uses light energy to abstract electrons from H(2)O, generating O(2) and a proton gradient subsequently used for ATP formation. It consists of a core antenna complex that captures photons, and an electron transfer chain that converts photonic excitation into a charge separation. The D1/D2 (PsbA/PsbD) reaction center heterodimer binds P680, the primary electron donor of PSII as well as several subsequent electron acceptors. In Aethionema cordifolium (Lebanon stonecress), this protein is Photosystem II protein D1.